Here is a 486-residue protein sequence, read N- to C-terminus: Homoserine O-acetyltransferase (486 aa).

The AB hydrolase-1 domain maps to Asn-66–Glu-436. Ser-162 is an active-site residue. The active-site Nucleophile is Ser-162. Positions Lys-248–Ser-274 are disordered. The segment covering Ser-250–Ala-262 has biased composition (polar residues). Residues Asp-401 and His-430 contribute to the active site.

This sequence belongs to the AB hydrolase superfamily. MetX family.

It catalyses the reaction L-homoserine + acetyl-CoA = O-acetyl-L-homoserine + CoA. The protein operates within amino-acid biosynthesis; L-methionine biosynthesis via de novo pathway; O-acetyl-L-homoserine from L-homoserine: step 1/1. Its function is as follows. Commits homoserine to the methionine biosynthesis pathway by catalyzing its O-acetylation. This chain is Homoserine O-acetyltransferase (MET2), found in Saccharomyces pastorianus (Lager yeast).